The primary structure comprises 338 residues: LINE-1 retrotransposable element ORF1 protein (338 aa).

A disordered region spans residues M1 to D40. 2 stretches are compositionally biased toward polar residues: residues K8–A17 and S26–M35. Residues R49–V153 are a coiled coil. The segment at N157–D252 is RNA recognition motif (RRM) domain. The C-terminal domain (CTD) stretch occupies residues L253–L317.

Belongs to the transposase 22 family. Homotrimer (via coiled coil domain). May also form larger homooligomers. May interact with DDX39A, HNRNPA1, SERBP1 and YBX1. Interacts with TEX19 and UBR2. Interacts with MOV10. Interacts with APOBEC3D; this interaction inhibits LINE-1 retrotransposition. Post-translationally, polyubiquitinated, probably by UBR2, which induces its degradation.

The protein localises to the nucleus. The protein resides in the nucleolus. It localises to the cytoplasm. Its subcellular location is the cytoplasmic ribonucleoprotein granule. It is found in the stress granule. Functionally, nucleic acid-binding protein which is essential for retrotransposition of LINE-1 elements in the genome. Functions as a nucleic acid chaperone binding its own transcript and therefore preferentially mobilizing the transcript from which they are encoded. The sequence is that of LINE-1 retrotransposable element ORF1 protein (L1RE1) from Homo sapiens (Human).